The sequence spans 141 residues: D-aminoacyl-tRNA deacylase (141 aa).

The Gly-cisPro motif, important for rejection of L-amino acids signature appears at 133 to 134; it reads GP.

This sequence belongs to the DTD family. In terms of assembly, homodimer.

It is found in the cytoplasm. It catalyses the reaction glycyl-tRNA(Ala) + H2O = tRNA(Ala) + glycine + H(+). The enzyme catalyses a D-aminoacyl-tRNA + H2O = a tRNA + a D-alpha-amino acid + H(+). An aminoacyl-tRNA editing enzyme that deacylates mischarged D-aminoacyl-tRNAs. Also deacylates mischarged glycyl-tRNA(Ala), protecting cells against glycine mischarging by AlaRS. Acts via tRNA-based rather than protein-based catalysis; rejects L-amino acids rather than detecting D-amino acids in the active site. By recycling D-aminoacyl-tRNA to D-amino acids and free tRNA molecules, this enzyme counteracts the toxicity associated with the formation of D-aminoacyl-tRNA entities in vivo and helps enforce protein L-homochirality. The sequence is that of D-aminoacyl-tRNA deacylase from Thermobifida fusca (strain YX).